Here is a 131-residue protein sequence, read N- to C-terminus: Transcription antitermination protein NusB (131 aa).

This sequence belongs to the NusB family.

Its function is as follows. Involved in transcription antitermination. Required for transcription of ribosomal RNA (rRNA) genes. Binds specifically to the boxA antiterminator sequence of the ribosomal RNA (rrn) operons. The protein is Transcription antitermination protein NusB of Aliarcobacter butzleri (strain RM4018) (Arcobacter butzleri).